Reading from the N-terminus, the 1210-residue chain is Histone-lysine N-methyltransferase EHMT2 (1210 aa).

Residues 1–23 are compositionally biased toward low complexity; it reads MAAAAGAAAAAAAEGEAPAEMGA. 2 disordered regions span residues 1–262 and 280–386; these read MAAA…LEEW and DERV…EYME. Position 2 is an N-acetylalanine (A2). Basic and acidic residues predominate over residues 26-38; it reads LEKETRGATERVH. Position 40 is a phosphoserine (S40). At T44 the chain carries Phosphothreonine. Phosphoserine is present on S47. A compositionally biased stretch (low complexity) spans 105-128; it reads GRILLGHATKSFPSSPSKGGSCPS. S140 bears the Phosphoserine mark. The span at 155-165 shows a compositional bias: low complexity; sequence PGAQGAAAAGS. S173 carries the phosphoserine modification. K185 carries the post-translational modification N6,N6,N6-trimethyllysine; by EHMT2; alternate. Position 185 is an N6,N6-dimethyllysine; by EHMT2; alternate (K185). Basic and acidic residues predominate over residues 198 to 216; that stretch reads PEKRPPEIQHFRMSDDVHS. Residues K219 and K229 each participate in a glycyl lysine isopeptide (Lys-Gly) (interchain with G-Cter in SUMO2) cross-link. Phosphoserine occurs at positions 232, 242, and 246. Over residues 280–291 the composition is skewed to basic and acidic residues; that stretch reads DERVDSDSKSEV. The span at 298–327 shows a compositional bias: acidic residues; sequence LSEEEEEEEEEEEEEEEEEEEEEEEEDEES. Positions 338 to 347 are enriched in basic residues; it reads GRRKAKKKWR. A phosphoserine mark is found at S350, S412, and S413. The tract at residues 548–608 is disordered; that stretch reads IPRGDGVTPP…LADTIDSSGP (61 aa). T555 is modified (phosphothreonine). The residue at position 569 (S569) is a Phosphoserine. A Glycyl lysine isopeptide (Lys-Gly) (interchain with G-Cter in SUMO2) cross-link involves residue K634. ANK repeat units follow at residues 649–678, 684–713, 717–746, 750–780, 784–813, 817–846, and 850–879; these read FHPRQLYLSVKQGELQKVILMLLDNLDPNF, SKRTPLHAAAQKGSVEICHVLLQAGANINA, QQRTPLMEAVVNNHLEVARYMVQRGGCVYS, DGSTCLHHAAKIGNLEMVSLLLSTGQVDVNA, GGWTPIIWAAEHKHIEVIRMLLTRGADVTL, EENICLHWASFTGSAAIAEVLLNARCDLHA, and HGDTPLHIAARESYHDCVLLFLSRGANPEL. The tract at residues 817 to 819 is histone H3K9me binding; it reads EEN. The Pre-SET domain occupies 972–1035; it reads QHCTCVDDCS…NCKNRVVQSG (64 aa). Residues C974, C976, C980, C985, C987, C1017, C1021, C1023, and C1027 each contribute to the Zn(2+) site. One can recognise an SET domain in the interval 1038 to 1155; the sequence is VRLQLYRTAK…TGEELGFDYG (118 aa). Residues 1048 to 1050, Y1085, and 1112 to 1113 each bind S-adenosyl-L-methionine; these read MGW and NH. An interaction with histone H3 region spans residues 1074 to 1093; sequence DAEADVREDDSYLFDLDNKD. A Zn(2+)-binding site is contributed by C1115. The tract at residues 1154 to 1157 is interaction with histone H3; sequence YGDR. Residues 1164 to 1180 form the Post-SET domain; that stretch reads KYFTCQCGSEKCKHSAE. Residue C1168 coordinates Zn(2+). Q1169 provides a ligand contact to S-adenosyl-L-methionine. C1170 and C1175 together coordinate Zn(2+). Phosphoserine is present on S1204. T1210 carries the post-translational modification Phosphothreonine.

It belongs to the class V-like SAM-binding methyltransferase superfamily. Histone-lysine methyltransferase family. Suvar3-9 subfamily. Heterodimer; heterodimerizes with EHMT1/GLP. Interacts with GFI1B and WIZ. Part of the E2F6.com-1 complex in G0 phase composed of E2F6, MGA, MAX, TFDP1, CBX3, BAT8, EHMT1, RING1, RNF2, MBLR, L3MBTL2 and YAF2. Part of a complex composed of TRIM28, HDAC1, HDAC2 and EHMT2. Interacts with UHRF1. Interacts with CDYL. Interacts with REST only in the presence of CDYL. Part of a complex containing at least CDYL, REST, WIZ, SETB1, EHMT1 and EHMT2. Interacts with PRDM9 and CDYL; interaction only takes place when PRDM9 is bound to hotspot DNA. Interacts with SMYD5. In terms of processing, methylated at Lys-185; automethylated. As to expression, expressed in all tissues examined, with high levels in fetal liver, thymus, lymph node, spleen and peripheral blood leukocytes and lower level in bone marrow.

The protein localises to the nucleus. It localises to the chromosome. The enzyme catalyses N(6)-methyl-L-lysyl(9)-[histone H3] + S-adenosyl-L-methionine = N(6),N(6)-dimethyl-L-lysyl(9)-[histone H3] + S-adenosyl-L-homocysteine + H(+). The catalysed reaction is L-lysyl(9)-[histone H3] + S-adenosyl-L-methionine = N(6)-methyl-L-lysyl(9)-[histone H3] + S-adenosyl-L-homocysteine + H(+). Its function is as follows. Histone methyltransferase that specifically mono- and dimethylates 'Lys-9' of histone H3 (H3K9me1 and H3K9me2, respectively) in euchromatin. H3K9me represents a specific tag for epigenetic transcriptional repression by recruiting HP1 proteins to methylated histones. Also mediates monomethylation of 'Lys-56' of histone H3 (H3K56me1) in G1 phase, leading to promote interaction between histone H3 and PCNA and regulating DNA replication. Also weakly methylates 'Lys-27' of histone H3 (H3K27me). Also required for DNA methylation, the histone methyltransferase activity is not required for DNA methylation, suggesting that these 2 activities function independently. Probably targeted to histone H3 by different DNA-binding proteins like E2F6, MGA, MAX and/or DP1. May also methylate histone H1. In addition to the histone methyltransferase activity, also methylates non-histone proteins: mediates dimethylation of 'Lys-373' of p53/TP53. Also methylates CDYL, WIZ, ACIN1, DNMT1, HDAC1, ERCC6, KLF12 and itself. The chain is Histone-lysine N-methyltransferase EHMT2 (EHMT2) from Homo sapiens (Human).